The chain runs to 739 residues: Endoglucanase F (739 aa).

An N-terminal signal peptide occupies residues Met-1–Ala-27. Residues Ala-28–Glu-470 are catalytic. Residue Asp-84 is the Nucleophile of the active site. Active-site residues include His-400, Asp-438, and Glu-447. Residues Thr-480–Asp-639 enclose the CBM3 domain. The Dockerin domain occupies Pro-664–Ala-737.

Belongs to the glycosyl hydrolase 9 (cellulase E) family. Ca(2+) is required as a cofactor.

The catalysed reaction is Endohydrolysis of (1-&gt;4)-beta-D-glucosidic linkages in cellulose, lichenin and cereal beta-D-glucans.. In terms of biological role, this enzyme catalyzes the endohydrolysis of 1,4-beta-glucosidic linkages in cellulose, lichenin and cereal beta-D-glucans. In Acetivibrio thermocellus (strain ATCC 27405 / DSM 1237 / JCM 9322 / NBRC 103400 / NCIMB 10682 / NRRL B-4536 / VPI 7372) (Clostridium thermocellum), this protein is Endoglucanase F (celF).